Here is a 108-residue protein sequence, read N- to C-terminus: Hydrogenase expression/formation protein HupN (108 aa).

The tract at residues 88-108 (REPQLPPHLQAQLPPKEPNSP) is disordered.

Belongs to the HupF/HypC family.

This Azotobacter chroococcum mcd 1 protein is Hydrogenase expression/formation protein HupN (hupN).